The chain runs to 127 residues: UPF0102 protein SYNAS_23220 (127 aa).

This sequence belongs to the UPF0102 family.

In Syntrophus aciditrophicus (strain SB), this protein is UPF0102 protein SYNAS_23220.